The primary structure comprises 351 residues: Alanine racemase (351 aa).

Lys-35 serves as the catalytic Proton acceptor; specific for D-alanine. N6-(pyridoxal phosphate)lysine is present on Lys-35. Residue Arg-127 participates in substrate binding. The active-site Proton acceptor; specific for L-alanine is the Tyr-247. Residue Met-295 coordinates substrate.

This sequence belongs to the alanine racemase family. Pyridoxal 5'-phosphate serves as cofactor.

The enzyme catalyses L-alanine = D-alanine. It participates in amino-acid biosynthesis; D-alanine biosynthesis; D-alanine from L-alanine: step 1/1. Functionally, catalyzes the interconversion of L-alanine and D-alanine. May also act on other amino acids. This chain is Alanine racemase (alr), found in Vesicomyosocius okutanii subsp. Calyptogena okutanii (strain HA).